The chain runs to 247 residues: 7-carboxy-7-deazaguanine synthase (247 aa).

Substrate is bound by residues 15-17 (IQG) and Arg30. The region spanning 21-247 (LVGRRQIFVR…PQMHRALGLR (227 aa)) is the Radical SAM core domain. Positions 34, 38, and 41 each coordinate [4Fe-4S] cluster. Residue Thr43 coordinates Mg(2+). Thr78 serves as a coordination point for substrate. Gly80 serves as a coordination point for S-adenosyl-L-methionine.

It belongs to the radical SAM superfamily. 7-carboxy-7-deazaguanine synthase family. Homodimer. [4Fe-4S] cluster is required as a cofactor. The cofactor is S-adenosyl-L-methionine. Requires Mg(2+) as cofactor.

It catalyses the reaction 6-carboxy-5,6,7,8-tetrahydropterin + H(+) = 7-carboxy-7-deazaguanine + NH4(+). It participates in purine metabolism; 7-cyano-7-deazaguanine biosynthesis. Functionally, catalyzes the complex heterocyclic radical-mediated conversion of 6-carboxy-5,6,7,8-tetrahydropterin (CPH4) to 7-carboxy-7-deazaguanine (CDG), a step common to the biosynthetic pathways of all 7-deazapurine-containing compounds. The chain is 7-carboxy-7-deazaguanine synthase from Methanothermobacter thermautotrophicus (strain ATCC 29096 / DSM 1053 / JCM 10044 / NBRC 100330 / Delta H) (Methanobacterium thermoautotrophicum).